The sequence spans 361 residues: Putative F-box protein At3g25460 (361 aa).

Residues 1–45 (MMMPELPEDLLVEILCRVPATSLKRLRSTCKLWNHLYNDKRFKSK) enclose the F-box domain.

This Arabidopsis thaliana (Mouse-ear cress) protein is Putative F-box protein At3g25460.